We begin with the raw amino-acid sequence, 144 residues long: Large ribosomal subunit protein uL15 (144 aa).

Residues 1–53 are disordered; that stretch reads MRLNTLSPAEGSKHASKRLGRGIGSGLGKTGGRGHKGQKSRSGGGVRRGFEGG. The span at 21 to 31 shows a compositional bias: gly residues; it reads RGIGSGLGKTG.

It belongs to the universal ribosomal protein uL15 family. In terms of assembly, part of the 50S ribosomal subunit.

Functionally, binds to the 23S rRNA. This chain is Large ribosomal subunit protein uL15, found in Edwardsiella ictaluri (strain 93-146).